Consider the following 344-residue polypeptide: L-rhamnose-proton symporter (344 aa).

10 consecutive transmembrane segments (helical) span residues 4-24 (AIIL…CFYA), 38-58 (WSIG…YLLL), 68-88 (FSIA…IGNI), 101-121 (MGIG…TPIL), 137-157 (TLLG…AGLL), 175-195 (LILA…MDAA), 207-227 (INSL…GAII), 259-279 (ILFS…YAWG), 290-310 (MSWM…GLLL), and 321-341 (VAVL…VGLG).

The protein belongs to the L-rhamnose transporter (TC 2.A.7.6) family.

The protein localises to the cell inner membrane. The catalysed reaction is L-rhamnopyranose(in) + H(+)(in) = L-rhamnopyranose(out) + H(+)(out). In terms of biological role, uptake of L-rhamnose across the cytoplasmic membrane with the concomitant transport of protons into the cell (symport system). This Yersinia pseudotuberculosis serotype O:1b (strain IP 31758) protein is L-rhamnose-proton symporter.